The sequence spans 38 residues: Photosystem II reaction center protein Y (38 aa).

Residues Met1–Arg4 lie on the Lumenal side of the membrane. Residues Leu5 to Ile23 form a helical membrane-spanning segment. Topologically, residues Gly24 to Val38 are stromal.

It belongs to the PsbY family. As to quaternary structure, PSII is composed of 1 copy each of membrane proteins PsbA, PsbB, PsbC, PsbD, PsbE, PsbF, PsbH, PsbI, PsbJ, PsbK, PsbL, PsbM, PsbT, PsbX, PsbY, PsbZ, Psb30/Ycf12, at least 3 peripheral proteins of the oxygen-evolving complex and a large number of cofactors. It forms dimeric complexes.

The protein resides in the plastid. It localises to the cyanelle thylakoid membrane. In terms of biological role, loosely associated component of the core of photosystem II (PSII), it is not always seen in crystals. PSII is a light-driven water plastoquinone oxidoreductase, using light energy to abstract electrons from H(2)O, generating a proton gradient subsequently used for ATP formation. In Cyanophora paradoxa, this protein is Photosystem II reaction center protein Y.